The primary structure comprises 464 residues: Asparagine--tRNA ligase (464 aa).

It belongs to the class-II aminoacyl-tRNA synthetase family. In terms of assembly, homodimer.

The protein localises to the cytoplasm. It carries out the reaction tRNA(Asn) + L-asparagine + ATP = L-asparaginyl-tRNA(Asn) + AMP + diphosphate + H(+). The sequence is that of Asparagine--tRNA ligase from Xanthomonas campestris pv. campestris (strain 8004).